The primary structure comprises 726 residues: Sensory/regulatory protein RpfC (726 aa).

The next 5 membrane-spanning stretches (helical) occupy residues 23 to 40, 52 to 72, 95 to 115, 128 to 148, and 152 to 172; these read NLIR…LGWR, TWLI…AILL, IMAI…WVTI, AATA…PYWK, and YLSW…DSLL. The 223-residue stretch at 195–417 folds into the Histidine kinase domain; the sequence is NMSHEFRTPL…VFWFELPMAI (223 aa). Phosphohistidine; by autocatalysis is present on His-198. The Response regulatory domain maps to 463 to 581; the sequence is RMLVADDHEA…KLLDTLADLA (119 aa). 4-aspartylphosphate is present on Asp-512. The region spanning 618–711 is the HPt domain; the sequence is GEEFERQFVR…KAGKDALDAR (94 aa). Position 657 is a phosphohistidine (His-657).

At low DSF concentrations, interacts with RpfF. Autophosphorylated. Activation may require a sequential transfer of a phosphate group from a His in the primary transmitter domain, to an Asp in the receiver domain and to a His in the secondary transmitter domain.

It localises to the cell inner membrane. The catalysed reaction is ATP + protein L-histidine = ADP + protein N-phospho-L-histidine.. With respect to regulation, binding of DSF to the sensor region causes allosteric change, which facilitates RpfC autophosphorylation. Hybrid sensor kinase that regulates diverse biological functions through two distinct molecular mechanisms. At low cell density, the extracellular concentration of the diffusible signaling factor (DSF) is below a threshold, and unphosphorylated RpfC is involved in the negative regulation of DSF synthesis, via direct interaction with the DSF synthase RpfF. Interaction prevents synthesis of DSF, which remains at a basal level. This activity does not involve the phosphorelay mechanism and is not dependent on RpfG. Is also member of the two-component regulatory system RpfG/RpfC, which is involved in the perception and response to DSF, which is essential for cell-cell signaling. At high cell density, the level of extracellular DSF increases and binding of DSF to the sensor region of RpfC causes autophosphorylation of RpfC, which results in the release of RpfF and the activation of RpfG via a four-step phosphorelay. Activation of RpfG leads to the positive regulation of biofilm dispersal and the production of virulence factors. This is Sensory/regulatory protein RpfC (rpfC) from Xanthomonas campestris pv. campestris (strain ATCC 33913 / DSM 3586 / NCPPB 528 / LMG 568 / P 25).